The primary structure comprises 413 residues: Coiled-coil domain-containing protein 83 (413 aa).

The segment at 1–21 (MENSGKANKKDTHDGPPKEIK) is disordered. Residues 8-21 (NKKDTHDGPPKEIK) are compositionally biased toward basic and acidic residues. Coiled-coil stretches lie at residues 37–184 (EDAV…RKKI) and 216–256 (WEND…LSNC).

The chain is Coiled-coil domain-containing protein 83 (CCDC83) from Homo sapiens (Human).